Here is a 194-residue protein sequence, read N- to C-terminus: Pyridoxine/pyridoxamine 5'-phosphate oxidase (194 aa).

FMN is bound by residues 42–47, 57–58, arginine 63, lysine 64, and glutamine 86; these read RVVLLK and FT. Lysine 47 provides a ligand contact to substrate. Residues tyrosine 104, arginine 108, and serine 112 each coordinate substrate. FMN is bound by residues 121–122 and tryptophan 166; that span reads QS. 172–174 is a substrate binding site; the sequence is RIH. Residue arginine 176 coordinates FMN.

It belongs to the pyridoxamine 5'-phosphate oxidase family. In terms of assembly, homodimer. FMN serves as cofactor.

It carries out the reaction pyridoxamine 5'-phosphate + O2 + H2O = pyridoxal 5'-phosphate + H2O2 + NH4(+). It catalyses the reaction pyridoxine 5'-phosphate + O2 = pyridoxal 5'-phosphate + H2O2. It participates in cofactor metabolism; pyridoxal 5'-phosphate salvage; pyridoxal 5'-phosphate from pyridoxamine 5'-phosphate: step 1/1. The protein operates within cofactor metabolism; pyridoxal 5'-phosphate salvage; pyridoxal 5'-phosphate from pyridoxine 5'-phosphate: step 1/1. In terms of biological role, catalyzes the oxidation of either pyridoxine 5'-phosphate (PNP) or pyridoxamine 5'-phosphate (PMP) into pyridoxal 5'-phosphate (PLP). The polypeptide is Pyridoxine/pyridoxamine 5'-phosphate oxidase (Ehrlichia ruminantium (strain Welgevonden)).